The chain runs to 156 residues: Transcriptional repressor NrdR (156 aa).

A zinc finger lies at 3 to 34; the sequence is CPYCGHLDNKVIDSRINKDATITRRRRSCLAC. Residues 49–139 enclose the ATP-cone domain; the sequence is PMLVKKDGRR…VYRQFKDVDE (91 aa).

This sequence belongs to the NrdR family. The cofactor is Zn(2+).

Negatively regulates transcription of bacterial ribonucleotide reductase nrd genes and operons by binding to NrdR-boxes. This is Transcriptional repressor NrdR from Desulfotalea psychrophila (strain LSv54 / DSM 12343).